Consider the following 55-residue polypeptide: Mitochondrial import receptor subunit TOM7 homolog (55 aa).

Topologically, residues 1 to 20 (MVKLSKEAKQRLQQLFKGGQ) are cytoplasmic. A helical membrane pass occupies residues 21–36 (FAIRWGFIPLVIYLGF). Residues 37-55 (KRGADPGMPEPTVLSLLWG) lie on the Mitochondrial intermembrane side of the membrane.

Belongs to the Tom7 family. Forms part of the preprotein translocase complex of the outer mitochondrial membrane (TOM complex) which consists of at least 7 different proteins (TOMM5, TOMM6, TOMM7, TOMM20, TOMM22, TOMM40 and TOMM70).

It is found in the mitochondrion outer membrane. Functionally, required for assembly and stability of the TOM complex. Positive regulator of PRKN translocation to damaged mitochondria. Acts probably by stabilizing PINK1 on the outer membrane of depolarized mitochondria. This is Mitochondrial import receptor subunit TOM7 homolog (TOMM7) from Bos taurus (Bovine).